The following is a 627-amino-acid chain: DNA-directed RNA polymerase subunit gamma (627 aa).

C70, C72, C85, and C88 together coordinate Zn(2+). The Mg(2+) site is built by D468, D470, and D472.

It belongs to the RNA polymerase beta' chain family. RpoC1 subfamily. As to quaternary structure, in cyanobacteria the RNAP catalytic core is composed of 2 alpha, 1 beta, 1 beta', 1 gamma and 1 omega subunit. When a sigma factor is associated with the core the holoenzyme is formed, which can initiate transcription. Mg(2+) is required as a cofactor. The cofactor is Zn(2+).

It carries out the reaction RNA(n) + a ribonucleoside 5'-triphosphate = RNA(n+1) + diphosphate. Functionally, DNA-dependent RNA polymerase catalyzes the transcription of DNA into RNA using the four ribonucleoside triphosphates as substrates. The chain is DNA-directed RNA polymerase subunit gamma from Synechococcus sp. (strain JA-3-3Ab) (Cyanobacteria bacterium Yellowstone A-Prime).